The following is a 217-amino-acid chain: Small ribosomal subunit protein uS2 (217 aa).

This sequence belongs to the universal ribosomal protein uS2 family.

The chain is Small ribosomal subunit protein uS2 from Korarchaeum cryptofilum (strain OPF8).